The sequence spans 121 residues: Class I hydrophobin 2 (121 aa).

The first 18 residues, 1–18 (MQFTTIVMTLAAAVAVTA), serve as a signal peptide directing secretion. 4 disulfide bridges follow: C52-C101, C60-C94, C61-C79, and C102-C116. N83 carries an N-linked (GlcNAc...) asparagine glycan.

The protein belongs to the fungal hydrophobin family. As to quaternary structure, self-assembles to form functional amyloid fibrils called rodlets. Self-assembly into fibrillar rodlets occurs spontaneously at hydrophobic:hydrophilic interfaces and the rodlets further associate laterally to form amphipathic monolayers. Expressed in conidia and aerial hyphae.

It is found in the secreted. Its subcellular location is the cell wall. Its function is as follows. Aerial growth, conidiation, and dispersal of filamentous fungi in the environment rely upon a capability of their secreting small amphipathic proteins called hydrophobins (HPBs) with low sequence identity. Class I can self-assemble into an outermost layer of rodlet bundles on aerial cell surfaces, conferring cellular hydrophobicity that supports fungal growth, development and dispersal; whereas Class II form highly ordered films at water-air interfaces through intermolecular interactions but contribute nothing to the rodlet structure. Hcf-2 is a class I hydrophobin that is not necessary for the development of hyphae or conidia but contributes to cell surface hydrophobicity. This is Class I hydrophobin 2 from Passalora fulva (Tomato leaf mold).